A 376-amino-acid chain; its full sequence is Chaperone protein DnaJ (376 aa).

The J domain occupies 5-70 (DYYEVLGVGR…DKKAAYDQFG (66 aa)). A CR-type zinc finger spans residues 132 to 210 (GLTKELRIPT…CHGEGRVEKS (79 aa)). Zn(2+) contacts are provided by C145, C148, C162, C165, C184, C187, C198, and C201. 4 CXXCXGXG motif repeats span residues 145–152 (CDLCDGSG), 162–169 (CGTCHGQG), 184–191 (CPTCHGRG), and 198–205 (CGKCHGEG).

This sequence belongs to the DnaJ family. As to quaternary structure, homodimer. Zn(2+) is required as a cofactor.

Its subcellular location is the cytoplasm. Functionally, participates actively in the response to hyperosmotic and heat shock by preventing the aggregation of stress-denatured proteins and by disaggregating proteins, also in an autonomous, DnaK-independent fashion. Unfolded proteins bind initially to DnaJ; upon interaction with the DnaJ-bound protein, DnaK hydrolyzes its bound ATP, resulting in the formation of a stable complex. GrpE releases ADP from DnaK; ATP binding to DnaK triggers the release of the substrate protein, thus completing the reaction cycle. Several rounds of ATP-dependent interactions between DnaJ, DnaK and GrpE are required for fully efficient folding. Also involved, together with DnaK and GrpE, in the DNA replication of plasmids through activation of initiation proteins. In Shewanella loihica (strain ATCC BAA-1088 / PV-4), this protein is Chaperone protein DnaJ.